The chain runs to 119 residues: Large ribosomal subunit protein uL18 (119 aa).

The protein belongs to the universal ribosomal protein uL18 family. In terms of assembly, part of the 50S ribosomal subunit; part of the 5S rRNA/L5/L18/L25 subcomplex. Contacts the 5S and 23S rRNAs.

Functionally, this is one of the proteins that bind and probably mediate the attachment of the 5S RNA into the large ribosomal subunit, where it forms part of the central protuberance. This is Large ribosomal subunit protein uL18 from Xylella fastidiosa (strain 9a5c).